A 362-amino-acid polypeptide reads, in one-letter code: Ferrochelatase (362 aa).

2 residues coordinate Fe cation: histidine 228 and glutamate 309.

This sequence belongs to the ferrochelatase family.

The protein localises to the cytoplasm. The enzyme catalyses heme b + 2 H(+) = protoporphyrin IX + Fe(2+). The protein operates within porphyrin-containing compound metabolism; protoheme biosynthesis; protoheme from protoporphyrin-IX: step 1/1. Catalyzes the ferrous insertion into protoporphyrin IX. The chain is Ferrochelatase from Bordetella parapertussis (strain 12822 / ATCC BAA-587 / NCTC 13253).